Consider the following 132-residue polypeptide: Small ribosomal subunit protein uS11 (132 aa).

This sequence belongs to the universal ribosomal protein uS11 family. In terms of assembly, part of the 30S ribosomal subunit. Interacts with proteins S7 and S18. Binds to IF-3.

In terms of biological role, located on the platform of the 30S subunit, it bridges several disparate RNA helices of the 16S rRNA. Forms part of the Shine-Dalgarno cleft in the 70S ribosome. This chain is Small ribosomal subunit protein uS11, found in Lachnoclostridium phytofermentans (strain ATCC 700394 / DSM 18823 / ISDg) (Clostridium phytofermentans).